Reading from the N-terminus, the 320-residue chain is Fructose-1,6-bisphosphatase class 1 (320 aa).

4 residues coordinate Mg(2+): Glu-84, Asp-103, Leu-105, and Asp-106. Residues 106 to 109 (DGSS), Asn-196, and Lys-262 contribute to the substrate site. Glu-268 is a Mg(2+) binding site.

It belongs to the FBPase class 1 family. As to quaternary structure, homotetramer. Mg(2+) serves as cofactor.

It is found in the cytoplasm. It catalyses the reaction beta-D-fructose 1,6-bisphosphate + H2O = beta-D-fructose 6-phosphate + phosphate. Its pathway is carbohydrate biosynthesis; gluconeogenesis. The chain is Fructose-1,6-bisphosphatase class 1 from Shewanella amazonensis (strain ATCC BAA-1098 / SB2B).